The primary structure comprises 103 residues: Putative glutaredoxin-C12 (103 aa).

The region spanning 1–102 (MERVRDLASE…QMLKASNAIW (102 aa)) is the Glutaredoxin domain. A disulfide bridge links Cys21 with Cys24.

Belongs to the glutaredoxin family. CC-type subfamily.

It localises to the cytoplasm. Functionally, has a glutathione-disulfide oxidoreductase activity in the presence of NADPH and glutathione reductase. Reduces low molecular weight disulfides and proteins. The chain is Putative glutaredoxin-C12 (GRXC12) from Arabidopsis thaliana (Mouse-ear cress).